Reading from the N-terminus, the 295-residue chain is Movement protein (295 aa).

Residues 256–295 (KKTNVKEESPTSDPQSGEVSSMTQSVPGAADTRIPKPRRR) are disordered. The segment covering 266 to 281 (TSDPQSGEVSSMTQSV) has biased composition (polar residues).

This sequence belongs to the bromovirus movement protein family.

The protein resides in the host cell junction. It is found in the host plasmodesma. In terms of biological role, transports viral genome to neighboring plant cells directly through plasmosdesmata, without any budding. The movement protein allows efficient cell to cell propagation, by bypassing the host cell wall barrier. Acts by forming a tubular structure at the host plasmodesmata, enlarging it enough to allow free passage of virion capsids. The chain is Movement protein from Broad bean mottle virus.